The sequence spans 207 residues: Large ribosomal subunit protein uL4 (207 aa).

The tract at residues Ala55–Gly76 is disordered. The segment covering Lys63–Gly76 has biased composition (basic residues).

Belongs to the universal ribosomal protein uL4 family. In terms of assembly, part of the 50S ribosomal subunit.

One of the primary rRNA binding proteins, this protein initially binds near the 5'-end of the 23S rRNA. It is important during the early stages of 50S assembly. It makes multiple contacts with different domains of the 23S rRNA in the assembled 50S subunit and ribosome. In terms of biological role, forms part of the polypeptide exit tunnel. The polypeptide is Large ribosomal subunit protein uL4 (Phytoplasma mali (strain AT)).